Here is a 187-residue protein sequence, read N- to C-terminus: GTP cyclohydrolase 1 (187 aa).

Zn(2+) contacts are provided by C78, H81, and C150.

Belongs to the GTP cyclohydrolase I family. In terms of assembly, homomer.

It catalyses the reaction GTP + H2O = 7,8-dihydroneopterin 3'-triphosphate + formate + H(+). It functions in the pathway cofactor biosynthesis; 7,8-dihydroneopterin triphosphate biosynthesis; 7,8-dihydroneopterin triphosphate from GTP: step 1/1. This chain is GTP cyclohydrolase 1, found in Brevibacillus brevis (strain 47 / JCM 6285 / NBRC 100599).